A 358-amino-acid chain; its full sequence is Glucose 1-dehydrogenase (358 aa).

A Zn(2+)-binding site is contributed by Cys-38. Position 40 (Thr-40) interacts with substrate. Positions 65, 66, 92, 95, 98, and 106 each coordinate Zn(2+). The substrate site is built by Glu-113, Glu-149, and Asn-153. Residue Glu-149 coordinates Zn(2+). Residues 187 to 190, 209 to 211, 268 to 270, 296 to 298, and Lys-342 contribute to the NADP(+) site; these read SGPI, NRR, FGT, and SVN. Asn-298 serves as a coordination point for substrate.

It belongs to the zinc-containing alcohol dehydrogenase family. Glucose 1-dehydrogenase subfamily. Zn(2+) is required as a cofactor.

It catalyses the reaction D-glucose + NAD(+) = D-glucono-1,5-lactone + NADH + H(+). It carries out the reaction D-glucose + NADP(+) = D-glucono-1,5-lactone + NADPH + H(+). Functionally, catalyzes the NAD(P)(+)-dependent oxidation of D-glucose to D-gluconate via gluconolactone. Can utilize both NAD(+) and NADP(+) as electron acceptor. Is involved in the degradation of glucose through a non-phosphorylative variant of the Entner-Doudoroff pathway. This Metallosphaera sedula (strain ATCC 51363 / DSM 5348 / JCM 9185 / NBRC 15509 / TH2) protein is Glucose 1-dehydrogenase.